The primary structure comprises 354 residues: Glycerol-3-phosphate dehydrogenase [NAD(+)], glycosomal (354 aa).

Residues 15–20 (GSGAFG), Phe-90, Lys-118, and Ala-150 each bind NAD(+). Residue Lys-118 coordinates substrate. The active-site Proton acceptor is the Lys-203. NAD(+)-binding residues include Arg-267 and Glu-293. Residue 267-268 (RN) participates in substrate binding. Residues 352-354 (SKM) carry the Microbody targeting signal motif.

The protein belongs to the NAD-dependent glycerol-3-phosphate dehydrogenase family.

It localises to the glycosome. It catalyses the reaction sn-glycerol 3-phosphate + NAD(+) = dihydroxyacetone phosphate + NADH + H(+). This chain is Glycerol-3-phosphate dehydrogenase [NAD(+)], glycosomal (GPD), found in Trypanosoma brucei rhodesiense.